Reading from the N-terminus, the 159-residue chain is Probable chemoreceptor glutamine deamidase CheD 2 (159 aa).

It belongs to the CheD family.

It catalyses the reaction L-glutaminyl-[protein] + H2O = L-glutamyl-[protein] + NH4(+). Its function is as follows. Probably deamidates glutamine residues to glutamate on methyl-accepting chemotaxis receptors (MCPs), playing an important role in chemotaxis. This chain is Probable chemoreceptor glutamine deamidase CheD 2, found in Anaeromyxobacter dehalogenans (strain 2CP-C).